A 131-amino-acid polypeptide reads, in one-letter code: Leptin receptor gene-related protein (131 aa).

A run of 4 helical transmembrane segments spans residues 7–27 (LVAL…GCAL), 32–52 (VYWP…YFIA), 69–89 (LAYF…VVLA), and 100–120 (GLVL…FLVF).

This sequence belongs to the OB-RGRP/VPS55 family. In terms of assembly, interacts with LEPR. Interacts with RAB13. In terms of tissue distribution, widely distributed in the brain, with elevated expression in the hypothalamic regions, including the paraventricular nucleus. In the placenta, present at high levels in the junctional zone situated towards the maternal aspect and throughout the labyrinth zone in close proximity to the developing fetus.

It is found in the golgi apparatus membrane. Its subcellular location is the endosome membrane. Functionally, negatively regulates leptin receptor (LEPR) cell surface expression, and thus decreases response to leptin. Negatively regulates growth hormone (GH) receptor cell surface expression in liver. May play a role in liver resistance to GH during periods of reduced nutrient availability. The sequence is that of Leptin receptor gene-related protein (Leprot) from Mus musculus (Mouse).